The sequence spans 561 residues: Sperm-tail PG-rich repeat-containing protein 2 (561 aa).

STPGR repeat units follow at residues 21 to 34 (VGPGTYQVPFPKQQ), 63 to 72 (PGPAHYNVSQ), and 97 to 104 (GPGPGSYN). The disordered stretch occupies residues 123–143 (PAVSRNIDIPSIPSSGKSHGY). STPGR repeat units lie at residues 164-191 (GPAYYNPQFDYPKASLKYKGVNFGNATG), 200-210 (GPGPGQYDIIQ), 250-285 (PGPGKYNIKSEFDMIKSMSALVNSPSFIFFSETERF), 292-299 (TPAPGTYN), 334-367 (LPGPGFYDISTNIVKAQVKKPCLKKQPKTGFGSS), 421-438 (LPAPGRYDVQKSYDMSQV), and 471-481 (GPGPATYSPVL).

This chain is Sperm-tail PG-rich repeat-containing protein 2 (Stpg2), found in Mus musculus (Mouse).